Here is a 283-residue protein sequence, read N- to C-terminus: Thymidylate synthase (283 aa).

R22 serves as a coordination point for dUMP. C160 acts as the Nucleophile in catalysis. DUMP contacts are provided by residues 180–183 (RSCD), N191, and 221–223 (HIY). (6R)-5,10-methylene-5,6,7,8-tetrahydrofolate is bound at residue D183. S282 contributes to the (6R)-5,10-methylene-5,6,7,8-tetrahydrofolate binding site.

It belongs to the thymidylate synthase family. Bacterial-type ThyA subfamily. In terms of assembly, homodimer.

It is found in the cytoplasm. The enzyme catalyses dUMP + (6R)-5,10-methylene-5,6,7,8-tetrahydrofolate = 7,8-dihydrofolate + dTMP. Its pathway is pyrimidine metabolism; dTTP biosynthesis. Catalyzes the reductive methylation of 2'-deoxyuridine-5'-monophosphate (dUMP) to 2'-deoxythymidine-5'-monophosphate (dTMP) while utilizing 5,10-methylenetetrahydrofolate (mTHF) as the methyl donor and reductant in the reaction, yielding dihydrofolate (DHF) as a by-product. This enzymatic reaction provides an intracellular de novo source of dTMP, an essential precursor for DNA biosynthesis. The polypeptide is Thymidylate synthase (Vibrio parahaemolyticus serotype O3:K6 (strain RIMD 2210633)).